We begin with the raw amino-acid sequence, 151 residues long: Apolipoprotein A-I (151 aa).

An N-terminal signal peptide occupies residues 1 to 18; that stretch reads MKAVVLTLAVLFLTGSQA. Positions 19-24 are excised as a propeptide; the sequence is RHFWQQ. 2 repeat units span residues 67–88 and 89–110. Residues 67-143 are 4 X approximate tandem repeats; the sequence is LKLLDNWDTL…EVELYRQKVA (77 aa). M109 is modified (methionine sulfoxide). The 3; half-length repeat unit spans residues 111 to 121; the sequence is KDLEEVKQKVQ. Repeat unit 4 spans residues 122-143; the sequence is PYLDDFQKKWQEEVELYRQKVA.

It belongs to the apolipoprotein A1/A4/E family. In terms of assembly, homodimer. Interacts with APOA1BP and CLU. Component of a sperm activating protein complex (SPAP), consisting of APOA1, an immunoglobulin heavy chain, an immunoglobulin light chain and albumin. Interacts with NDRG1. Interacts with SCGB3A2. Interacts with NAXE and YJEFN3. In terms of processing, glycosylated. Post-translationally, palmitoylated. Phosphorylation sites are present in the extracellular medium. As to expression, major protein of plasma HDL, also found in chylomicrons.

The protein resides in the secreted. Its function is as follows. Participates in the reverse transport of cholesterol from tissues to the liver for excretion by promoting cholesterol efflux from tissues and by acting as a cofactor for the lecithin cholesterol acyltransferase (LCAT). As part of the SPAP complex, activates spermatozoa motility. The protein is Apolipoprotein A-I (APOA1) of Panthera tigris altaica (Siberian tiger).